Reading from the N-terminus, the 134-residue chain is Large ribosomal subunit protein uL16c (134 aa).

This sequence belongs to the universal ribosomal protein uL16 family. Part of the 50S ribosomal subunit.

The protein resides in the plastid. The protein localises to the chloroplast. The polypeptide is Large ribosomal subunit protein uL16c (Oltmannsiellopsis viridis (Marine flagellate)).